We begin with the raw amino-acid sequence, 172 residues long: 3-hydroxydecanoyl-[acyl-carrier-protein] dehydratase (172 aa).

Residue H71 is part of the active site.

The protein belongs to the thioester dehydratase family. FabA subfamily. As to quaternary structure, homodimer.

It localises to the cytoplasm. The enzyme catalyses a (3R)-hydroxyacyl-[ACP] = a (2E)-enoyl-[ACP] + H2O. It carries out the reaction (3R)-hydroxydecanoyl-[ACP] = (2E)-decenoyl-[ACP] + H2O. It catalyses the reaction (2E)-decenoyl-[ACP] = (3Z)-decenoyl-[ACP]. It functions in the pathway lipid metabolism; fatty acid biosynthesis. In terms of biological role, necessary for the introduction of cis unsaturation into fatty acids. Catalyzes the dehydration of (3R)-3-hydroxydecanoyl-ACP to E-(2)-decenoyl-ACP and then its isomerization to Z-(3)-decenoyl-ACP. Can catalyze the dehydratase reaction for beta-hydroxyacyl-ACPs with saturated chain lengths up to 16:0, being most active on intermediate chain length. In Sodalis glossinidius (strain morsitans), this protein is 3-hydroxydecanoyl-[acyl-carrier-protein] dehydratase.